Reading from the N-terminus, the 361-residue chain is Chorismate synthase (361 aa).

NADP(+)-binding residues include Arg48 and Arg54. Residues Arg125 to Ser127, Asn238 to Ala239, Gly278, Lys293 to Ser297, and Arg319 contribute to the FMN site.

Belongs to the chorismate synthase family. In terms of assembly, homotetramer. It depends on FMNH2 as a cofactor.

It carries out the reaction 5-O-(1-carboxyvinyl)-3-phosphoshikimate = chorismate + phosphate. It participates in metabolic intermediate biosynthesis; chorismate biosynthesis; chorismate from D-erythrose 4-phosphate and phosphoenolpyruvate: step 7/7. Its function is as follows. Catalyzes the anti-1,4-elimination of the C-3 phosphate and the C-6 proR hydrogen from 5-enolpyruvylshikimate-3-phosphate (EPSP) to yield chorismate, which is the branch point compound that serves as the starting substrate for the three terminal pathways of aromatic amino acid biosynthesis. This reaction introduces a second double bond into the aromatic ring system. This Citrobacter koseri (strain ATCC BAA-895 / CDC 4225-83 / SGSC4696) protein is Chorismate synthase.